The chain runs to 178 residues: Ribosome maturation factor RimM (178 aa).

One can recognise a PRC barrel domain in the interval 101–178 (TDEYYWYQLV…VMRVEWDADF (78 aa)).

It belongs to the RimM family. In terms of assembly, binds ribosomal protein uS19.

Its subcellular location is the cytoplasm. Its function is as follows. An accessory protein needed during the final step in the assembly of 30S ribosomal subunit, possibly for assembly of the head region. Essential for efficient processing of 16S rRNA. May be needed both before and after RbfA during the maturation of 16S rRNA. It has affinity for free ribosomal 30S subunits but not for 70S ribosomes. The chain is Ribosome maturation factor RimM from Pseudomonas entomophila (strain L48).